A 156-amino-acid polypeptide reads, in one-letter code: Ribosomal RNA large subunit methyltransferase H (156 aa).

Residues leucine 73, glycine 104, and 123-128 (LSPLTL) contribute to the S-adenosyl-L-methionine site.

It belongs to the RNA methyltransferase RlmH family. In terms of assembly, homodimer.

Its subcellular location is the cytoplasm. It carries out the reaction pseudouridine(1915) in 23S rRNA + S-adenosyl-L-methionine = N(3)-methylpseudouridine(1915) in 23S rRNA + S-adenosyl-L-homocysteine + H(+). In terms of biological role, specifically methylates the pseudouridine at position 1915 (m3Psi1915) in 23S rRNA. The protein is Ribosomal RNA large subunit methyltransferase H of Photobacterium profundum (strain SS9).